Consider the following 191-residue polypeptide: NF-kappa-B inhibitor-interacting Ras-like protein 2 (191 aa).

A small GTPase-like region spans residues 1-191 (MGKSCKVVVC…KNKGSGSLDG (191 aa)). GTP is bound at residue 11–18 (GQASVGKT). Positions 35–43 (MIETQEDIY) match the Effector region motif. Residues 61–65 (DTRGL) and 120–123 (NKCD) each bind GTP. The interval 169–191 (TQPQSKSAFPLSRKNKGSGSLDG) is disordered.

The protein belongs to the small GTPase superfamily. Ras family. KappaB-Ras subfamily. Interacts with both NF-kappa-B inhibitor alpha (NFKBIA) and beta (NFKBIB) in vitro. However, it probably only interacts with NFKBIB in vivo. Interacts with GFOD1.

Its subcellular location is the cytoplasm. Functionally, atypical Ras-like protein that acts as a potent regulator of NF-kappa-B activity by preventing the degradation of NF-kappa-B inhibitor beta (NFKBIB) by most signals, explaining why NFKBIB is more resistant to degradation. May act by blocking phosphorylation of NFKBIB and nuclear localization of p65/RELA NF-kappa-B subunit. It is unclear whether it acts as a GTPase. Both GTP- and GDP-bound forms block phosphorylation of NFKBIB. The chain is NF-kappa-B inhibitor-interacting Ras-like protein 2 (Nkiras2) from Mus musculus (Mouse).